The primary structure comprises 566 residues: Putative ABC transporter ATP-binding protein BA_2641/GBAA_2641/BAS2461 (566 aa).

2 ABC transporter domains span residues 5 to 246 (ISFE…GLRE) and 300 to 533 (LKVE…ANLK). Residues 39-46 (GRSGSGKS) and 333-340 (GHNGAGKS) each bind ATP.

Belongs to the ABC transporter superfamily.

The protein resides in the cell membrane. In terms of biological role, probably part of an ABC transporter complex. Responsible for energy coupling to the transport system. The chain is Putative ABC transporter ATP-binding protein BA_2641/GBAA_2641/BAS2461 from Bacillus anthracis.